We begin with the raw amino-acid sequence, 299 residues long: Sulfate adenylyltransferase subunit 2 (299 aa).

Belongs to the PAPS reductase family. CysD subfamily. In terms of assembly, heterodimer composed of CysD, the smaller subunit, and CysN.

It carries out the reaction sulfate + ATP + H(+) = adenosine 5'-phosphosulfate + diphosphate. It functions in the pathway sulfur metabolism; hydrogen sulfide biosynthesis; sulfite from sulfate: step 1/3. With CysN forms the ATP sulfurylase (ATPS) that catalyzes the adenylation of sulfate producing adenosine 5'-phosphosulfate (APS) and diphosphate, the first enzymatic step in sulfur assimilation pathway. APS synthesis involves the formation of a high-energy phosphoric-sulfuric acid anhydride bond driven by GTP hydrolysis by CysN coupled to ATP hydrolysis by CysD. In Colwellia psychrerythraea (strain 34H / ATCC BAA-681) (Vibrio psychroerythus), this protein is Sulfate adenylyltransferase subunit 2.